We begin with the raw amino-acid sequence, 296 residues long: Cobalamin trafficking protein CblD (296 aa).

Residues 1–38 (MANVLCNRARLVSYLPGFCSLVKRVVNPKAFSTAGSSG) constitute a mitochondrion transit peptide. Residue lysine 203 is modified to N6-acetyllysine.

In terms of assembly, heterodimer with MMACHC. Forms a multiprotein complex with MMACHC, MTR and MTRR. As to expression, widely expressed at high levels.

The protein localises to the cytoplasm. It is found in the mitochondrion. Involved in cobalamin metabolism and trafficking. Plays a role in regulating the biosynthesis and the proportion of two coenzymes, methylcob(III)alamin (MeCbl) and 5'-deoxyadenosylcobalamin (AdoCbl). Promotes oxidation of cob(II)alamin bound to MMACHC. The processing of cobalamin in the cytosol occurs in a multiprotein complex composed of at least MMACHC, MMADHC, MTRR (methionine synthase reductase) and MTR (methionine synthase) which may contribute to shuttle safely and efficiently cobalamin towards MTR in order to produce methionine. The chain is Cobalamin trafficking protein CblD from Homo sapiens (Human).